The chain runs to 656 residues: PAN2-PAN3 deadenylation complex subunit pan3 (656 aa).

Disordered regions lie at residues 1-24 (MAATRYNSGDLRRQVGSPRAKNRD) and 75-117 (SFTP…QQAN). The segment at 24-53 (DTKETLCRNVVIYGHCRWEDSGCTFNHDQN) adopts a C3H1-type zinc-finger fold. The short motif at 63–83 (NSNRRVFNVESPSFTPANQQQ) is the PABPC-interacting motif-2 (PAM-2) element. 2 stretches are compositionally biased toward polar residues: residues 75 to 96 (SFTPANQQQSAGKKSTFSSQAA) and 107 to 117 (GTSTPTLQQAN). Residues 251 to 514 (QLLPNSGLPN…TVETLLGGIT (264 aa)) are pseudokinase domain. Residues 275 to 280 (TRNSTC), Arg302, 352 to 359 (DFHPLSET), and 412 to 413 (SK) each bind ATP. Positions 515-553 (THLANFANFVMQESDEKEFHLMRELENGRIARLMFKLSV) form a coiled coil. The tract at residues 554 to 656 (VNERGDSCGV…SKPSATGATI (103 aa)) is knob domain.

Belongs to the protein kinase superfamily. PAN3 family. Homodimer. Forms a heterotrimer with a catalytic subunit par-1/pan2 to form the poly(A)-nuclease (PAN) deadenylation complex. Interacts (via PAM-2 motif) with poly(A)-binding protein pabp-1 (via PABC domain), conferring substrate specificity of the enzyme complex.

It is found in the cytoplasm. Regulatory subunit of the poly(A)-nuclease (PAN) deadenylation complex, one of two cytoplasmic mRNA deadenylases involved in mRNA turnover. PAN specifically shortens poly(A) tails of RNA and the activity is stimulated by poly(A)-binding protein pabp-1. PAN deadenylation is followed by rapid degradation of the shortened mRNA tails by the CCR4-NOT complex. Deadenylated mRNAs are then degraded by two alternative mechanisms, namely exosome-mediated 3'-5' exonucleolytic degradation, or deadenylation-dependent mRNA decaping and subsequent 5'-3' exonucleolytic degradation by rgb-30/xrn1. May also be involved in post-transcriptional maturation of mRNA poly(A) tails. par-2/pan3 acts as a positive regulator for PAN activity, recruiting the catalytic subunit par-1/pan2 to mRNA via its interaction with RNA and with pabp-1. The protein is PAN2-PAN3 deadenylation complex subunit pan3 (par-2) of Neurospora crassa (strain ATCC 24698 / 74-OR23-1A / CBS 708.71 / DSM 1257 / FGSC 987).